Consider the following 140-residue polypeptide: Nucleoside diphosphate kinase (140 aa).

ATP contacts are provided by K11, F59, R87, T93, R104, and N114. Residue H117 is the Pros-phosphohistidine intermediate of the active site.

This sequence belongs to the NDK family. As to quaternary structure, homotetramer. The cofactor is Mg(2+).

The protein localises to the cytoplasm. It catalyses the reaction a 2'-deoxyribonucleoside 5'-diphosphate + ATP = a 2'-deoxyribonucleoside 5'-triphosphate + ADP. The catalysed reaction is a ribonucleoside 5'-diphosphate + ATP = a ribonucleoside 5'-triphosphate + ADP. Its function is as follows. Major role in the synthesis of nucleoside triphosphates other than ATP. The ATP gamma phosphate is transferred to the NDP beta phosphate via a ping-pong mechanism, using a phosphorylated active-site intermediate. This is Nucleoside diphosphate kinase from Persephonella marina (strain DSM 14350 / EX-H1).